The chain runs to 502 residues: Aspartyl/glutamyl-tRNA(Asn/Gln) amidotransferase subunit B (502 aa).

Belongs to the GatB/GatE family. GatB subfamily. As to quaternary structure, heterotrimer of A, B and C subunits.

The catalysed reaction is L-glutamyl-tRNA(Gln) + L-glutamine + ATP + H2O = L-glutaminyl-tRNA(Gln) + L-glutamate + ADP + phosphate + H(+). It catalyses the reaction L-aspartyl-tRNA(Asn) + L-glutamine + ATP + H2O = L-asparaginyl-tRNA(Asn) + L-glutamate + ADP + phosphate + 2 H(+). In terms of biological role, allows the formation of correctly charged Asn-tRNA(Asn) or Gln-tRNA(Gln) through the transamidation of misacylated Asp-tRNA(Asn) or Glu-tRNA(Gln) in organisms which lack either or both of asparaginyl-tRNA or glutaminyl-tRNA synthetases. The reaction takes place in the presence of glutamine and ATP through an activated phospho-Asp-tRNA(Asn) or phospho-Glu-tRNA(Gln). This chain is Aspartyl/glutamyl-tRNA(Asn/Gln) amidotransferase subunit B, found in Brucella suis (strain ATCC 23445 / NCTC 10510).